A 130-amino-acid polypeptide reads, in one-letter code: Small ribosomal subunit protein eS8 (130 aa).

Belongs to the eukaryotic ribosomal protein eS8 family. As to quaternary structure, part of the 30S ribosomal subunit.

The protein is Small ribosomal subunit protein eS8 of Ignicoccus hospitalis (strain KIN4/I / DSM 18386 / JCM 14125).